We begin with the raw amino-acid sequence, 549 residues long: Endoplasmic reticulum mannosyl-oligosaccharide 1,2-alpha-mannosidase (549 aa).

Over 1–4 (MKNS) the chain is Cytoplasmic. A helical; Signal-anchor for type II membrane protein membrane pass occupies residues 5–24 (VGISIATIVAIIAAIYYVPW). At 25-354 (YEHFERKSPG…LLASGSTEGL (330 aa)) the chain is on the lumenal side. N-linked (GlcNAc...) asparagine glycosylation is found at asparagine 96, asparagine 155, and asparagine 224. The cysteines at positions 340 and 385 are disulfide-linked. Glutamate 399 acts as the Proton donor in catalysis. Cysteine 468 and cysteine 471 form a disulfide bridge. Residue threonine 525 participates in Ca(2+) binding.

The protein belongs to the glycosyl hydrolase 47 family. As to quaternary structure, homodimer. Ca(2+) serves as cofactor.

The protein localises to the endoplasmic reticulum membrane. The catalysed reaction is N(4)-(alpha-D-Man-(1-&gt;2)-alpha-D-Man-(1-&gt;2)-alpha-D-Man-(1-&gt;3)-[alpha-D-Man-(1-&gt;2)-alpha-D-Man-(1-&gt;3)-[alpha-D-Man-(1-&gt;2)-alpha-D-Man-(1-&gt;6)]-alpha-D-Man-(1-&gt;6)]-beta-D-Man-(1-&gt;4)-beta-D-GlcNAc-(1-&gt;4)-beta-D-GlcNAc)-L-asparaginyl-[protein] (N-glucan mannose isomer 9A1,2,3B1,2,3) + 4 H2O = N(4)-(alpha-D-Man-(1-&gt;3)-[alpha-D-Man-(1-&gt;3)-[alpha-D-Man-(1-&gt;6)]-alpha-D-Man-(1-&gt;6)]-beta-D-Man-(1-&gt;4)-beta-D-GlcNAc-(1-&gt;4)-beta-D-GlcNAc)-L-asparaginyl-[protein] (N-glucan mannose isomer 5A1,2) + 4 beta-D-mannose. It carries out the reaction N(4)-(alpha-D-Man-(1-&gt;2)-alpha-D-Man-(1-&gt;2)-alpha-D-Man-(1-&gt;3)-[alpha-D-Man-(1-&gt;3)-[alpha-D-Man-(1-&gt;2)-alpha-D-Man-(1-&gt;6)]-alpha-D-Man-(1-&gt;6)]-beta-D-Man-(1-&gt;4)-beta-D-GlcNAc-(1-&gt;4)-beta-D-GlcNAc)-L-asparaginyl-[protein] (N-glucan mannose isomer 8A1,2,3B1,3) + 3 H2O = N(4)-(alpha-D-Man-(1-&gt;3)-[alpha-D-Man-(1-&gt;3)-[alpha-D-Man-(1-&gt;6)]-alpha-D-Man-(1-&gt;6)]-beta-D-Man-(1-&gt;4)-beta-D-GlcNAc-(1-&gt;4)-beta-D-GlcNAc)-L-asparaginyl-[protein] (N-glucan mannose isomer 5A1,2) + 3 beta-D-mannose. Its pathway is protein modification; protein glycosylation. Functionally, involved in glycoprotein quality control as it is important for the targeting of misfolded glycoproteins for degradation. It primarily trims a single alpha-1,2-linked mannose residue from Man(9)GlcNAc(2) to produce Man(8)GlcNAc(2), but at high enzyme concentrations it further trims the carbohydrates to Man(5)GlcNAc(2). This chain is Endoplasmic reticulum mannosyl-oligosaccharide 1,2-alpha-mannosidase (MNS1), found in Saccharomyces cerevisiae (strain ATCC 204508 / S288c) (Baker's yeast).